The primary structure comprises 159 residues: Protein B1 (159 aa).

Positions 1–15 (MQKNMKTKKTKKRGR) are enriched in basic residues. Disordered stretches follow at residues 1-100 (MQKN…RTRE) and 133-159 (PGHG…DPPR). Basic and acidic residues predominate over residues 16–31 (KEGNTPETERRMEPAR). The span at 85–96 (RGRHIHTRGART) shows a compositional bias: basic residues.

This is Protein B1 (B1) from Human herpesvirus 6B (strain Z29) (HHV-6 variant B).